The primary structure comprises 122 residues: MIQQETRLKVADNSGAREVLTIKVLGGSGRKTANIGDVIVCTVKNATPGGVVKKGDVVKAVIVRTKSGVRRNDGSYIKFDENACVIIRDDKGPRGTRIFGPVARELREGNFMKIVSLAPEVL.

It belongs to the universal ribosomal protein uL14 family. As to quaternary structure, part of the 50S ribosomal subunit. Forms a cluster with proteins L3 and L19. In the 70S ribosome, L14 and L19 interact and together make contacts with the 16S rRNA in bridges B5 and B8.

Functionally, binds to 23S rRNA. Forms part of two intersubunit bridges in the 70S ribosome. This chain is Large ribosomal subunit protein uL14, found in Staphylococcus aureus (strain MW2).